Here is a 262-residue protein sequence, read N- to C-terminus: Putative glycyl-radical enzyme activating enzyme HI_0520 (262 aa).

The 243-residue stretch at valine 20–leucine 262 folds into the Radical SAM core domain. 3 residues coordinate [4Fe-4S] cluster: cysteine 34, cysteine 38, and cysteine 41. S-adenosyl-L-methionine contacts are provided by residues tyrosine 40–histidine 42, glycine 81, and aspartate 130–lysine 132.

It belongs to the organic radical-activating enzymes family. Requires [4Fe-4S] cluster as cofactor.

It catalyses the reaction glycyl-[protein] + reduced [flavodoxin] + S-adenosyl-L-methionine = glycin-2-yl radical-[protein] + semiquinone [flavodoxin] + 5'-deoxyadenosine + L-methionine + H(+). The polypeptide is Putative glycyl-radical enzyme activating enzyme HI_0520 (Haemophilus influenzae (strain ATCC 51907 / DSM 11121 / KW20 / Rd)).